Reading from the N-terminus, the 640-residue chain is 1,4-alpha-glucan branching enzyme GlgB (640 aa).

The active-site Nucleophile is the D318. The Proton donor role is filled by E371.

The protein belongs to the glycosyl hydrolase 13 family. GlgB subfamily. As to quaternary structure, monomer.

The catalysed reaction is Transfers a segment of a (1-&gt;4)-alpha-D-glucan chain to a primary hydroxy group in a similar glucan chain.. The protein operates within glycan biosynthesis; glycogen biosynthesis. Functionally, catalyzes the formation of the alpha-1,6-glucosidic linkages in glycogen by scission of a 1,4-alpha-linked oligosaccharide from growing alpha-1,4-glucan chains and the subsequent attachment of the oligosaccharide to the alpha-1,6 position. The chain is 1,4-alpha-glucan branching enzyme GlgB from Francisella tularensis subsp. holarctica (strain LVS).